Reading from the N-terminus, the 188-residue chain is Elongation factor P (188 aa).

It belongs to the elongation factor P family.

The protein resides in the cytoplasm. It functions in the pathway protein biosynthesis; polypeptide chain elongation. Involved in peptide bond synthesis. Stimulates efficient translation and peptide-bond synthesis on native or reconstituted 70S ribosomes in vitro. Probably functions indirectly by altering the affinity of the ribosome for aminoacyl-tRNA, thus increasing their reactivity as acceptors for peptidyl transferase. The chain is Elongation factor P from Mycoplasmoides gallisepticum (strain R(low / passage 15 / clone 2)) (Mycoplasma gallisepticum).